The following is a 630-amino-acid chain: MSSERVLSYAPAFKSFLDTSFFQELSRLKLDVLKLDSTCQPLTVNLDLHNIPKSADQVPLFLTNRSFEKHNNKRTNEVPLQGSIFNFNVLDEFKNLDKQLFLHQRALECWEDGIKDINKCVSFVIISFADLKKYRFYYWLGVPCFQRPSSTVLHVRPEPSLKGLFSKCQKWFDVNYSKWVCILDADDEIVNYDKCIIRKTKVLAIRDTSTMENVPSALTKNFLSVLQYDVPDLIDFKLLIIRQNEGSFALNATFASIDPQSSSSNPDMKVSGWERNVQGKLAPRVVDLSSLLDPLKIADQSVDLNLKLMKWRILPDLNLDIIKNTKVLLLGAGTLGCYVSRALIAWGVRKITFVDNGTVSYSNPVRQALYNFEDCGKPKAELAAASLKRIFPLMDATGVKLSIPMIGHKLVNEEAQHKDFDRLRALIKEHDIIFLLVDSRESRWLPSLLSNIENKTVINAALGFDSYLVMRHGNRDEQSSKQLGCYFCHDVVAPTDSLTDRTLDQMCTVTRPGVAMMASSLAVELMTSLLQTKYSGSETTVLGDIPHQIRGFLHNFSILKLETPAYEHCPACSPKVIEAFTDLGWEFVKKALEHPLYLEEISGLSVIKQEVERLGNDVFEWEDDESDEIA.

The GXGXXG motif motif lies at 331–336 (GAGTLG). The Glycyl thioester intermediate role is filled by Cys507. Residues 591 to 630 (ALEHPLYLEEISGLSVIKQEVERLGNDVFEWEDDESDEIA) form a homodimerization region.

Belongs to the ATG7 family. Homodimer; homodimerization is required for ATP-binding. Interacts with ATG8 through a thioester bond between Cys-507 and the C-terminal 'Gly-116' of ATG8 and with ATG12 through a thioester bond between Cys-507 and the C-terminal 'Gly-186' of ATG12. Also interacts with ATG3.

The protein resides in the cytoplasm. Its subcellular location is the preautophagosomal structure. E1-like activating enzyme involved in the 2 ubiquitin-like systems required for cytoplasm to vacuole transport (Cvt) and autophagy. Activates ATG12 for its conjugation with ATG5 and ATG8 for its conjugation with phosphatidylethanolamine. Both systems are needed for the ATG8 association to Cvt vesicles and autophagosomes membranes. Autophagy is essential for maintenance of amino acid levels and protein synthesis under nitrogen starvation. Required for selective autophagic degradation of the nucleus (nucleophagy) as well as for mitophagy which contributes to regulate mitochondrial quantity and quality by eliminating the mitochondria to a basal level to fulfill cellular energy requirements and preventing excess ROS production. Plays a role in the regulation of filamentous growth and chronological longevity. This chain is Ubiquitin-like modifier-activating enzyme ATG7 (ATG7), found in Saccharomyces cerevisiae (strain ATCC 204508 / S288c) (Baker's yeast).